Consider the following 197-residue polypeptide: Nucleoside triphosphate pyrophosphatase (197 aa).

Asp-72 serves as the catalytic Proton acceptor.

It belongs to the Maf family. A divalent metal cation is required as a cofactor.

The protein localises to the cytoplasm. The catalysed reaction is a ribonucleoside 5'-triphosphate + H2O = a ribonucleoside 5'-phosphate + diphosphate + H(+). It carries out the reaction a 2'-deoxyribonucleoside 5'-triphosphate + H2O = a 2'-deoxyribonucleoside 5'-phosphate + diphosphate + H(+). In terms of biological role, nucleoside triphosphate pyrophosphatase. May have a dual role in cell division arrest and in preventing the incorporation of modified nucleotides into cellular nucleic acids. In Corynebacterium glutamicum (strain R), this protein is Nucleoside triphosphate pyrophosphatase.